Here is a 196-residue protein sequence, read N- to C-terminus: ATP-dependent Clp protease proteolytic subunit (196 aa).

Serine 99 serves as the catalytic Nucleophile. Histidine 124 is an active-site residue.

It belongs to the peptidase S14 family. In terms of assembly, fourteen ClpP subunits assemble into 2 heptameric rings which stack back to back to give a disk-like structure with a central cavity, resembling the structure of eukaryotic proteasomes.

The protein resides in the cytoplasm. The enzyme catalyses Hydrolysis of proteins to small peptides in the presence of ATP and magnesium. alpha-casein is the usual test substrate. In the absence of ATP, only oligopeptides shorter than five residues are hydrolyzed (such as succinyl-Leu-Tyr-|-NHMec, and Leu-Tyr-Leu-|-Tyr-Trp, in which cleavage of the -Tyr-|-Leu- and -Tyr-|-Trp bonds also occurs).. Its function is as follows. Cleaves peptides in various proteins in a process that requires ATP hydrolysis. Has a chymotrypsin-like activity. Plays a major role in the degradation of misfolded proteins. The chain is ATP-dependent Clp protease proteolytic subunit from Campylobacter lari (strain RM2100 / D67 / ATCC BAA-1060).